Here is a 326-residue protein sequence, read N- to C-terminus: Acyl-CoA-binding domain-containing protein 4 (326 aa).

The 90-residue stretch at 10 to 99 (CQKQFQAAVS…MKLVAQKVID (90 aa)) folds into the ACB domain. An acyl-CoA contacts are provided by residues 21 to 30 (IQNLPKNGSY), 41 to 45 (YSYYK), Lys-67, and Tyr-86. 2 disordered regions span residues 147 to 170 (VQAA…SRLP) and 223 to 248 (KEAA…SLMG). Ser-164 carries the phosphoserine modification.

Its function is as follows. Binds medium- and long-chain acyl-CoA esters and may function as an intracellular carrier of acyl-CoA esters. This Rattus norvegicus (Rat) protein is Acyl-CoA-binding domain-containing protein 4 (Acbd4).